The chain runs to 455 residues: Bifunctional protein GlmU (455 aa).

A pyrophosphorylase region spans residues 1 to 230 (MANRFAVILA…FDETIGINDR (230 aa)). UDP-N-acetyl-alpha-D-glucosamine contacts are provided by residues 9 to 12 (LAAG), lysine 23, glutamine 73, and 78 to 79 (GT). Aspartate 103 contacts Mg(2+). The UDP-N-acetyl-alpha-D-glucosamine site is built by glycine 140, glutamate 155, asparagine 170, and asparagine 228. Asparagine 228 is a Mg(2+) binding site. Positions 231-251 (IALAEAEKIMKKRINEQHMRN) are linker. Residues 252–455 (GVSIIDPEQT…KEEYASKFKK (204 aa)) form an N-acetyltransferase region. UDP-N-acetyl-alpha-D-glucosamine contacts are provided by arginine 333 and lysine 351. The active-site Proton acceptor is histidine 363. UDP-N-acetyl-alpha-D-glucosamine-binding residues include tyrosine 366 and asparagine 377. Acetyl-CoA is bound by residues 386–387 (NY), alanine 423, and arginine 440.

The protein in the N-terminal section; belongs to the N-acetylglucosamine-1-phosphate uridyltransferase family. In the C-terminal section; belongs to the transferase hexapeptide repeat family. As to quaternary structure, homotrimer. Mg(2+) serves as cofactor.

It localises to the cytoplasm. It catalyses the reaction alpha-D-glucosamine 1-phosphate + acetyl-CoA = N-acetyl-alpha-D-glucosamine 1-phosphate + CoA + H(+). The catalysed reaction is N-acetyl-alpha-D-glucosamine 1-phosphate + UTP + H(+) = UDP-N-acetyl-alpha-D-glucosamine + diphosphate. It functions in the pathway nucleotide-sugar biosynthesis; UDP-N-acetyl-alpha-D-glucosamine biosynthesis; N-acetyl-alpha-D-glucosamine 1-phosphate from alpha-D-glucosamine 6-phosphate (route II): step 2/2. It participates in nucleotide-sugar biosynthesis; UDP-N-acetyl-alpha-D-glucosamine biosynthesis; UDP-N-acetyl-alpha-D-glucosamine from N-acetyl-alpha-D-glucosamine 1-phosphate: step 1/1. The protein operates within bacterial outer membrane biogenesis; LPS lipid A biosynthesis. Catalyzes the last two sequential reactions in the de novo biosynthetic pathway for UDP-N-acetylglucosamine (UDP-GlcNAc). The C-terminal domain catalyzes the transfer of acetyl group from acetyl coenzyme A to glucosamine-1-phosphate (GlcN-1-P) to produce N-acetylglucosamine-1-phosphate (GlcNAc-1-P), which is converted into UDP-GlcNAc by the transfer of uridine 5-monophosphate (from uridine 5-triphosphate), a reaction catalyzed by the N-terminal domain. In Oceanobacillus iheyensis (strain DSM 14371 / CIP 107618 / JCM 11309 / KCTC 3954 / HTE831), this protein is Bifunctional protein GlmU.